The primary structure comprises 277 residues: MALFIFLILVGYLMGSINSAIIVCRTFGLPDPREEGSKNPGATNVLRLGGKQYGIMVMVFDALKGILPVILAKFLSAEPVTVAFTALAAVVGHMYPVFFHFRGGKGVATTIGALLAFHFIIGVMVAATWLLVANFWRYSSLASIASISLAPFYSLILVGNLNIFPPLFMITILVLYKHRDNFNRLIDGKEPKIKFKHSVIEEIMEASPATSAEQEFPGKEVIDTNIDETEKTEQAEAVKKPKVKKATTKAKKTTSKEETTKKPKSTKPKTKTVKEKE.

5 consecutive transmembrane segments (helical) span residues 3–23 (LFIF…AIIV), 55–75 (IMVM…AKFL), 79–99 (PVTV…PVFF), 111–131 (IGAL…TWLL), and 155–175 (LILV…ILVL). The interval 207–277 (SPATSAEQEF…PKTKTVKEKE (71 aa)) is disordered. Positions 216–239 (FPGKEVIDTNIDETEKTEQAEAVK) are enriched in basic and acidic residues. Basic residues-rich tracts occupy residues 240 to 253 (KPKV…AKKT) and 262 to 271 (KPKSTKPKTK).

The protein belongs to the PlsY family. In terms of assembly, probably interacts with PlsX.

The protein resides in the cell inner membrane. It carries out the reaction an acyl phosphate + sn-glycerol 3-phosphate = a 1-acyl-sn-glycero-3-phosphate + phosphate. Its pathway is lipid metabolism; phospholipid metabolism. Its function is as follows. Catalyzes the transfer of an acyl group from acyl-phosphate (acyl-PO(4)) to glycerol-3-phosphate (G3P) to form lysophosphatidic acid (LPA). This enzyme utilizes acyl-phosphate as fatty acyl donor, but not acyl-CoA or acyl-ACP. This Legionella pneumophila subsp. pneumophila (strain Philadelphia 1 / ATCC 33152 / DSM 7513) protein is Glycerol-3-phosphate acyltransferase.